We begin with the raw amino-acid sequence, 147 residues long: Small ribosomal subunit protein uS5 (147 aa).

Residues 9–72 form the S5 DRBM domain; the sequence is FEEVIVDIGR…DDAFKNIIHV (64 aa).

Belongs to the universal ribosomal protein uS5 family. Part of the 30S ribosomal subunit. Contacts proteins S4 and S8.

Its function is as follows. With S4 and S12 plays an important role in translational accuracy. Functionally, located at the back of the 30S subunit body where it stabilizes the conformation of the head with respect to the body. This chain is Small ribosomal subunit protein uS5, found in Campylobacter concisus (strain 13826).